A 156-amino-acid polypeptide reads, in one-letter code: Phosphoribosyl-AMP cyclohydrolase (156 aa).

Asp-106 contacts Mg(2+). Cys-107 lines the Zn(2+) pocket. Asp-108 and Asp-110 together coordinate Mg(2+). Cys-123 and Cys-130 together coordinate Zn(2+).

The protein belongs to the PRA-CH family. In terms of assembly, homodimer. Mg(2+) is required as a cofactor. It depends on Zn(2+) as a cofactor.

It is found in the cytoplasm. It catalyses the reaction 1-(5-phospho-beta-D-ribosyl)-5'-AMP + H2O = 1-(5-phospho-beta-D-ribosyl)-5-[(5-phospho-beta-D-ribosylamino)methylideneamino]imidazole-4-carboxamide. It participates in amino-acid biosynthesis; L-histidine biosynthesis; L-histidine from 5-phospho-alpha-D-ribose 1-diphosphate: step 3/9. Its function is as follows. Catalyzes the hydrolysis of the adenine ring of phosphoribosyl-AMP. This Gluconobacter oxydans (strain 621H) (Gluconobacter suboxydans) protein is Phosphoribosyl-AMP cyclohydrolase.